Reading from the N-terminus, the 166-residue chain is 6,7-dimethyl-8-ribityllumazine synthase (166 aa).

Residues phenylalanine 22, 56–58 (SME), and 80–82 (AVI) each bind 5-amino-6-(D-ribitylamino)uracil. (2S)-2-hydroxy-3-oxobutyl phosphate is bound at residue 85–86 (ET). The Proton donor role is filled by histidine 88. Phenylalanine 113 serves as a coordination point for 5-amino-6-(D-ribitylamino)uracil. (2S)-2-hydroxy-3-oxobutyl phosphate is bound at residue arginine 127.

Belongs to the DMRL synthase family.

It carries out the reaction (2S)-2-hydroxy-3-oxobutyl phosphate + 5-amino-6-(D-ribitylamino)uracil = 6,7-dimethyl-8-(1-D-ribityl)lumazine + phosphate + 2 H2O + H(+). The protein operates within cofactor biosynthesis; riboflavin biosynthesis; riboflavin from 2-hydroxy-3-oxobutyl phosphate and 5-amino-6-(D-ribitylamino)uracil: step 1/2. In terms of biological role, catalyzes the formation of 6,7-dimethyl-8-ribityllumazine by condensation of 5-amino-6-(D-ribitylamino)uracil with 3,4-dihydroxy-2-butanone 4-phosphate. This is the penultimate step in the biosynthesis of riboflavin. The polypeptide is 6,7-dimethyl-8-ribityllumazine synthase (Thermotoga neapolitana (strain ATCC 49049 / DSM 4359 / NBRC 107923 / NS-E)).